Reading from the N-terminus, the 140-residue chain is Organic hydroperoxide resistance protein-like 1 (140 aa).

The protein belongs to the OsmC/Ohr family.

The chain is Organic hydroperoxide resistance protein-like 1 from Staphylococcus epidermidis (strain ATCC 35984 / DSM 28319 / BCRC 17069 / CCUG 31568 / BM 3577 / RP62A).